The chain runs to 62 residues: Sauvatide (62 aa).

An N-terminal signal peptide occupies residues 1-24 (MDILKKSLFLILFLGLVSISFCDG). The propeptide occupies 25–46 (EKRQDDDEANESEEKKEIHEVE). At Lys58 the chain carries Lysine amide.

As to expression, expressed by the skin glands.

It localises to the secreted. Induces contraction of smooth muscle in isolated rat urinary bladder with an EC(50) value of 2.2nM. This is Sauvatide from Phyllomedusa sauvagei (Sauvage's leaf frog).